The following is a 355-amino-acid chain: Zinc finger protein CONSTANS-LIKE 1 (355 aa).

Residues Cys12, Cys15, Cys35, His40, Cys55, Cys58, Cys78, and His83 each contribute to the Zn(2+) site. The B box-type 1; atypical zinc finger occupies 12–54 (CDTCRSAACTVYCRADSAYLCSSCDAQVHAANRLASRHERVRV). A B box-type 2; atypical zinc finger spans residues 55 to 97 (CQSCERAPAAFFCKADAASLCTTCDSEIHSANPLARRHQRVPI). Polar residues predominate over residues 252–264 (ESTTSDATVSNPR). The interval 252 to 281 (ESTTSDATVSNPRSPKAVTDQPPYPPAQML) is disordered. The CCT domain maps to 286–328 (REARVLRYREKKKMRKFEKTIRYASRKAYAEKRPRIKGRFAKK).

Belongs to the CONSTANS family. In terms of tissue distribution, highly expressed in leaves and at lower levels in stems, flowers and siliques. Not detected in roots.

The protein resides in the nucleus. In terms of biological role, putative transcription factor that may be involved in the light input to the circadian clock but does not affect flowering time. The chain is Zinc finger protein CONSTANS-LIKE 1 (COL1) from Arabidopsis thaliana (Mouse-ear cress).